Reading from the N-terminus, the 616-residue chain is Chaperone protein HtpG (616 aa).

The tract at residues 1-333 (MKKQFDTEVN…CQDLPLNVSR (333 aa)) is a; substrate-binding. A b region spans residues 334 to 542 (EILQQNKILS…SNDPTYQMQK (209 aa)). The interval 543–616 (IMLSMGQEVK…INEFLEKELL (74 aa)) is c.

Belongs to the heat shock protein 90 family. Homodimer.

The protein resides in the cytoplasm. In terms of biological role, molecular chaperone. Has ATPase activity. The sequence is that of Chaperone protein HtpG from Borrelia garinii subsp. bavariensis (strain ATCC BAA-2496 / DSM 23469 / PBi) (Borreliella bavariensis).